We begin with the raw amino-acid sequence, 196 residues long: Large ribosomal subunit protein mL66 (196 aa).

A mitochondrion-targeting transit peptide spans 1-34; that stretch reads MAALKALVSGCGRLLRGLLAGPAATSWSRLPARG.

It belongs to the bacterial ribosomal protein bS18 family. Mitochondrion-specific ribosomal protein mL66 subfamily. As to quaternary structure, component of the mitochondrial large ribosomal subunit (mt-LSU). Mature mammalian 55S mitochondrial ribosomes consist of a small (28S) and a large (39S) subunit. The 28S small subunit contains a 12S ribosomal RNA (12S mt-rRNA) and 30 different proteins. The 39S large subunit contains a 16S rRNA (16S mt-rRNA), a copy of mitochondrial valine transfer RNA (mt-tRNA(Val)), which plays an integral structural role, and 52 different proteins. mL66 forms a zinc-binding site with uL10m.

Its subcellular location is the mitochondrion. This is Large ribosomal subunit protein mL66 (MRPS18A) from Homo sapiens (Human).